The primary structure comprises 317 residues: Small glutamine-rich tetratricopeptide repeat-containing protein 2 (317 aa).

4 TPR repeats span residues 14-48 (LKQA…KPEE), 83-116 (AEKL…DPTS), 118-150 (VYYS…DPHH), and 151-184 (ARAF…DPNN). Residues 198–215 (LNQPSDSSATSGADQART) show a composition bias toward polar residues. Disordered regions lie at residues 198–224 (LNQP…PDLG) and 298–317 (MNNN…PPPQ).

The protein belongs to the SGT family.

It is found in the cytoplasm. The protein localises to the nucleus. Co-chaperone that binds to the molecular chaperone Hsp70 and regulates Hsp70 ATPase activity. The protein is Small glutamine-rich tetratricopeptide repeat-containing protein 2 (sgt2) of Schizosaccharomyces pombe (strain 972 / ATCC 24843) (Fission yeast).